Reading from the N-terminus, the 683-residue chain is MIKRQKDRKFELVSKFKPAGDQQQAINKLTAGFEKGYKEQILEGATGTGKTFTMANIIAKLNKPTLVITHNKTLVGQLYGEFKGFFPNNAVEYFVSYYDYYQPEAYVPQSDTYIEKDSAINDEIDQLRHATTSALMERNDVIVVASVSCIYGLGDPKEYARSVLMIHEGQEYERNTLLRDLVNLQYDRNDIDFQRGRFRVRGDVVEIFPAGNSNHAYRVEFFGDEIDRIVEIDSLTGEVIGERESISLFPATHFMTNDEQLRRALKAISKEMKVQVKKFEGEGKLLEAERIKQRTTYDMEMMGEVGYTNGIENYSRHMEGRKVGEPPYTLLDFFPDDFLILIDESHATMPEIRAMYNGDRNRKKTLIDYGFRLPSALDNRPLKLAEFEKHVNQILYVSATPGDYELERTDHKVEQIIRPTGLLDPKIEVRPIEGQIDDLVGEINKRIDRNERVFVTTLTKKMAEDLTDYLKDLGIKVRYLHSDIKTLERMQILRDLRLGKFDVLIGINLLREGIDVPEVSLVAILDADKEGFLRAYRPLVQTMGRAARNANGEVIMYADTITDSMKAAIEATQRRRKLQEEFNKEHGIVPKTIIKPVHDVISITKPSEDSKKEKTDSFADLNFDELTAKQKKTMIKNLQEQMKEAAKKLDFEEAANLRDAIMELQSSSRRPKTRKGKALNGKR.

The Helicase ATP-binding domain maps to 31 to 414 (AGFEKGYKEQ…ELERTDHKVE (384 aa)). 44–51 (GATGTGKT) contacts ATP. Positions 97–120 (YYDYYQPEAYVPQSDTYIEKDSAI) match the Beta-hairpin motif. The Helicase C-terminal domain maps to 435 to 601 (QIDDLVGEIN…TIIKPVHDVI (167 aa)). Residues 632–667 (KTMIKNLQEQMKEAAKKLDFEEAANLRDAIMELQSS) enclose the UVR domain. Residues 662-683 (MELQSSSRRPKTRKGKALNGKR) are disordered. The segment covering 669 to 683 (RRPKTRKGKALNGKR) has biased composition (basic residues).

It belongs to the UvrB family. As to quaternary structure, forms a heterotetramer with UvrA during the search for lesions. Interacts with UvrC in an incision complex.

The protein localises to the cytoplasm. Its function is as follows. The UvrABC repair system catalyzes the recognition and processing of DNA lesions. A damage recognition complex composed of 2 UvrA and 2 UvrB subunits scans DNA for abnormalities. Upon binding of the UvrA(2)B(2) complex to a putative damaged site, the DNA wraps around one UvrB monomer. DNA wrap is dependent on ATP binding by UvrB and probably causes local melting of the DNA helix, facilitating insertion of UvrB beta-hairpin between the DNA strands. Then UvrB probes one DNA strand for the presence of a lesion. If a lesion is found the UvrA subunits dissociate and the UvrB-DNA preincision complex is formed. This complex is subsequently bound by UvrC and the second UvrB is released. If no lesion is found, the DNA wraps around the other UvrB subunit that will check the other stand for damage. In Lactobacillus acidophilus (strain ATCC 700396 / NCK56 / N2 / NCFM), this protein is UvrABC system protein B.